The sequence spans 888 residues: Valine--tRNA ligase (888 aa).

The short motif at 43-53 is the 'HIGH' region element; sequence PFTSGTLHLGH. The short motif at 534-538 is the 'KMSKS' region element; the sequence is KMSKS. Lys537 provides a ligand contact to ATP.

The protein belongs to the class-I aminoacyl-tRNA synthetase family. ValS type 2 subfamily.

It localises to the cytoplasm. It catalyses the reaction tRNA(Val) + L-valine + ATP = L-valyl-tRNA(Val) + AMP + diphosphate. Catalyzes the attachment of valine to tRNA(Val). As ValRS can inadvertently accommodate and process structurally similar amino acids such as threonine, to avoid such errors, it has a 'posttransfer' editing activity that hydrolyzes mischarged Thr-tRNA(Val) in a tRNA-dependent manner. The sequence is that of Valine--tRNA ligase from Thermococcus kodakarensis (strain ATCC BAA-918 / JCM 12380 / KOD1) (Pyrococcus kodakaraensis (strain KOD1)).